The following is a 271-amino-acid chain: DNA-binding protein HEXBP (271 aa).

Composition is skewed to basic and acidic residues over residues 1-12 (MSETEDVKRPRT) and 21-42 (CGKEGHYARECPEADSKGDERS). A disordered region spans residues 1 to 42 (MSETEDVKRPRTESSTSCRNCGKEGHYARECPEADSKGDERS). CCHC-type zinc fingers lie at residues 16-33 (TSCRNCGKEGHYARECPE), 43-60 (TTCFRCGEEGHMSRECPN), 70-87 (MTCFRCGEAGHMSRDCPN), and 97-114 (FECYKCGQEGHLSRDCPS). The tract at residues 107–136 (HLSRDCPSSQGGSRGGYGQKRGRSGAQGGY) is disordered. The segment covering 118–136 (GSRGGYGQKRGRSGAQGGY) has biased composition (gly residues). CCHC-type zinc fingers lie at residues 140-157 (RTCYKCGDAGHISRDCPN), 168-185 (RTCYKCGDAGHISRDCPN), 196-213 (RKCYKCGESGHMSRECPS), 222-239 (RACYKCGKPGHISRECPE), and 253-270 (RTCYKCGEAGHISRDCPS).

It localises to the nucleus. In terms of biological role, binds to single-stranded DNA located in the 5' hexanucleotide repeat region of the L.major leishmanolysin (GP63) gene. The protein is DNA-binding protein HEXBP (HEXBP) of Leishmania major.